Reading from the N-terminus, the 562-residue chain is Endochitinase (562 aa).

An N-terminal signal peptide occupies residues 1-20 (MSLLYIILLFTQFLLLPTDA). Positions 27–311 (TNIAVYWGQN…EILKNLLTSA (285 aa)) constitute a GH18 domain. Residue Glu157 is the Proton donor of the active site. 2 disordered regions span residues 329–358 (TSSASTSSASTSQKKTTQSTTSTQSKSKVT) and 461–484 (TLSPTTTSTSSGSTSSGSTSSDST). Positions 481–562 (SDSTARTLAK…NFSYLESNYF (82 aa)) are chitin-binding, high affinity. Asn553 carries an N-linked (GlcNAc...) asparagine glycan.

This sequence belongs to the glycosyl hydrolase 18 family. Chitinase class V subfamily. In terms of processing, extensively glycosylated with a series of short O-linked mannose oligosaccharides ranging in size from Man(2) to Man(5).

It localises to the secreted. The protein resides in the cell wall. The enzyme catalyses Random endo-hydrolysis of N-acetyl-beta-D-glucosaminide (1-&gt;4)-beta-linkages in chitin and chitodextrins.. In terms of biological role, chitinase is required for cell separation during growth of S.cerevisiae. The polypeptide is Endochitinase (CTS1) (Saccharomyces cerevisiae (strain ATCC 204508 / S288c) (Baker's yeast)).